We begin with the raw amino-acid sequence, 195 residues long: NADH-quinone oxidoreductase subunit B (195 aa).

Residues C74, C75, C139, and C169 each coordinate [4Fe-4S] cluster.

This sequence belongs to the complex I 20 kDa subunit family. As to quaternary structure, NDH-1 is composed of 14 different subunits. Subunits NuoB, C, D, E, F, and G constitute the peripheral sector of the complex. It depends on [4Fe-4S] cluster as a cofactor.

The protein localises to the cell inner membrane. It catalyses the reaction a quinone + NADH + 5 H(+)(in) = a quinol + NAD(+) + 4 H(+)(out). In terms of biological role, NDH-1 shuttles electrons from NADH, via FMN and iron-sulfur (Fe-S) centers, to quinones in the respiratory chain. The immediate electron acceptor for the enzyme in this species is believed to be ubiquinone. Couples the redox reaction to proton translocation (for every two electrons transferred, four hydrogen ions are translocated across the cytoplasmic membrane), and thus conserves the redox energy in a proton gradient. The polypeptide is NADH-quinone oxidoreductase subunit B (Methylorubrum extorquens (strain PA1) (Methylobacterium extorquens)).